Reading from the N-terminus, the 817-residue chain is Leucine--tRNA ligase (817 aa).

Residues 42–52 (PYPSGRLHMGH) carry the 'HIGH' region motif. The 'KMSKS' region motif lies at 576 to 580 (KMSKS). Lysine 579 serves as a coordination point for ATP.

Belongs to the class-I aminoacyl-tRNA synthetase family.

It localises to the cytoplasm. It carries out the reaction tRNA(Leu) + L-leucine + ATP = L-leucyl-tRNA(Leu) + AMP + diphosphate. In Thioalkalivibrio sulfidiphilus (strain HL-EbGR7), this protein is Leucine--tRNA ligase.